Here is a 663-residue protein sequence, read N- to C-terminus: Endopolyphosphatase (663 aa).

The Cytoplasmic segment spans residues 1 to 14; that stretch reads MAVNEKDVGRKSRV. Residues 15–35 traverse the membrane as a helical; Signal-anchor for type II membrane protein segment; it reads SVVLWVFIALGTLFLCKNAFT. Topologically, residues 36-663 are vacuolar; that stretch reads FSSESIHGLK…ISTGYEDERN (628 aa). N-linked (GlcNAc...) asparagine glycosylation is found at asparagine 487 and asparagine 526. A disordered region spans residues 534–564; the sequence is SAEQNKKKKKKNGKPDKSIPRKKPDELPAGP. Residues 546 to 559 are compositionally biased toward basic and acidic residues; sequence GKPDKSIPRKKPDE.

This sequence belongs to the endopolyphosphatase PPN1 family. It depends on a divalent metal cation as a cofactor. Post-translationally, processing by proteases in the vacuole may be required for activation.

The protein resides in the vacuole membrane. The catalysed reaction is [phosphate](n+1) + n H2O = (n+1) phosphate + n H(+). In terms of biological role, catalyzes the hydrolysis of inorganic polyphosphate (polyP) chains of many hundreds of phosphate residues into shorter lengths. The chain is Endopolyphosphatase (PPN1) from Candida glabrata (strain ATCC 2001 / BCRC 20586 / JCM 3761 / NBRC 0622 / NRRL Y-65 / CBS 138) (Yeast).